The sequence spans 84 residues: uncharacterized protein (84 aa).

This is an uncharacterized protein from Dictyostelium discoideum (Social amoeba).